A 119-amino-acid polypeptide reads, in one-letter code: Ribonuclease P protein component (119 aa).

It belongs to the RnpA family. In terms of assembly, consists of a catalytic RNA component (M1 or rnpB) and a protein subunit.

It catalyses the reaction Endonucleolytic cleavage of RNA, removing 5'-extranucleotides from tRNA precursor.. In terms of biological role, RNaseP catalyzes the removal of the 5'-leader sequence from pre-tRNA to produce the mature 5'-terminus. It can also cleave other RNA substrates such as 4.5S RNA. The protein component plays an auxiliary but essential role in vivo by binding to the 5'-leader sequence and broadening the substrate specificity of the ribozyme. In Escherichia fergusonii (strain ATCC 35469 / DSM 13698 / CCUG 18766 / IAM 14443 / JCM 21226 / LMG 7866 / NBRC 102419 / NCTC 12128 / CDC 0568-73), this protein is Ribonuclease P protein component.